Consider the following 453-residue polypeptide: Bifunctional protein GlmU (453 aa).

Positions 1–225 are pyrophosphorylase; it reads MHAHVILAAG…AEEALGVNTR (225 aa). Residues 7 to 10, lysine 21, glutamine 72, and 77 to 78 each bind UDP-N-acetyl-alpha-D-glucosamine; these read LAAG and GT. Aspartate 102 contributes to the Mg(2+) binding site. Positions 138, 152, 167, and 223 each coordinate UDP-N-acetyl-alpha-D-glucosamine. Asparagine 223 is a Mg(2+) binding site. The interval 226-246 is linker; it reads EELARVEGVLLRRLRAEWMGK. Positions 247–453 are N-acetyltransferase; sequence GVRMILPETI…GYALRKLGEG (207 aa). Residues arginine 329 and lysine 347 each contribute to the UDP-N-acetyl-alpha-D-glucosamine site. Histidine 359 (proton acceptor) is an active-site residue. UDP-N-acetyl-alpha-D-glucosamine is bound by residues tyrosine 362 and asparagine 373. Residues alanine 376, 382–383, serine 401, alanine 419, and arginine 436 each bind acetyl-CoA; that span reads NY.

This sequence in the N-terminal section; belongs to the N-acetylglucosamine-1-phosphate uridyltransferase family. The protein in the C-terminal section; belongs to the transferase hexapeptide repeat family. As to quaternary structure, homotrimer. Mg(2+) serves as cofactor.

It is found in the cytoplasm. The enzyme catalyses alpha-D-glucosamine 1-phosphate + acetyl-CoA = N-acetyl-alpha-D-glucosamine 1-phosphate + CoA + H(+). It catalyses the reaction N-acetyl-alpha-D-glucosamine 1-phosphate + UTP + H(+) = UDP-N-acetyl-alpha-D-glucosamine + diphosphate. Its pathway is nucleotide-sugar biosynthesis; UDP-N-acetyl-alpha-D-glucosamine biosynthesis; N-acetyl-alpha-D-glucosamine 1-phosphate from alpha-D-glucosamine 6-phosphate (route II): step 2/2. The protein operates within nucleotide-sugar biosynthesis; UDP-N-acetyl-alpha-D-glucosamine biosynthesis; UDP-N-acetyl-alpha-D-glucosamine from N-acetyl-alpha-D-glucosamine 1-phosphate: step 1/1. It functions in the pathway bacterial outer membrane biogenesis; LPS lipid A biosynthesis. In terms of biological role, catalyzes the last two sequential reactions in the de novo biosynthetic pathway for UDP-N-acetylglucosamine (UDP-GlcNAc). The C-terminal domain catalyzes the transfer of acetyl group from acetyl coenzyme A to glucosamine-1-phosphate (GlcN-1-P) to produce N-acetylglucosamine-1-phosphate (GlcNAc-1-P), which is converted into UDP-GlcNAc by the transfer of uridine 5-monophosphate (from uridine 5-triphosphate), a reaction catalyzed by the N-terminal domain. This chain is Bifunctional protein GlmU, found in Thermus thermophilus (strain ATCC 27634 / DSM 579 / HB8).